We begin with the raw amino-acid sequence, 118 residues long: NADH-ubiquinone oxidoreductase chain 3 (118 aa).

A run of 3 helical transmembrane segments spans residues 9-29 (IYLV…FLFA), 62-82 (LVSI…PWAV), and 87-107 (IDLF…IGFL).

Belongs to the complex I subunit 3 family.

The protein localises to the mitochondrion membrane. The enzyme catalyses a ubiquinone + NADH + 5 H(+)(in) = a ubiquinol + NAD(+) + 4 H(+)(out). Functionally, core subunit of the mitochondrial membrane respiratory chain NADH dehydrogenase (Complex I) that is believed to belong to the minimal assembly required for catalysis. Complex I functions in the transfer of electrons from NADH to the respiratory chain. The immediate electron acceptor for the enzyme is believed to be ubiquinone. This Pinus sylvestris (Scotch pine) protein is NADH-ubiquinone oxidoreductase chain 3 (NAD3).